Consider the following 466-residue polypeptide: Ribulose bisphosphate carboxylase large chain (466 aa).

K4 bears the N6,N6,N6-trimethyllysine mark. N113 and T163 together coordinate substrate. Residue K165 is the Proton acceptor of the active site. K167 lines the substrate pocket. 3 residues coordinate Mg(2+): K191, D193, and E194. N6-carboxylysine is present on K191. H284 (proton acceptor) is an active-site residue. Residues R285, H317, and S369 each contribute to the substrate site.

It belongs to the RuBisCO large chain family. Type I subfamily. In terms of assembly, heterohexadecamer of 8 large chains and 8 small chains; disulfide-linked. The disulfide link is formed within the large subunit homodimers. It depends on Mg(2+) as a cofactor. Post-translationally, the disulfide bond which can form in the large chain dimeric partners within the hexadecamer appears to be associated with oxidative stress and protein turnover.

Its subcellular location is the plastid. The protein resides in the chloroplast. It catalyses the reaction 2 (2R)-3-phosphoglycerate + 2 H(+) = D-ribulose 1,5-bisphosphate + CO2 + H2O. The enzyme catalyses D-ribulose 1,5-bisphosphate + O2 = 2-phosphoglycolate + (2R)-3-phosphoglycerate + 2 H(+). Functionally, ruBisCO catalyzes two reactions: the carboxylation of D-ribulose 1,5-bisphosphate, the primary event in carbon dioxide fixation, as well as the oxidative fragmentation of the pentose substrate in the photorespiration process. Both reactions occur simultaneously and in competition at the same active site. The chain is Ribulose bisphosphate carboxylase large chain from Nelsonia canescens (Blue pussyleaf).